The following is a 563-amino-acid chain: NAD(P)H-quinone oxidoreductase chain 4 (563 aa).

Helical transmembrane passes span 25–45, 56–76, 90–110, 111–131, 133–153, 157–177, 189–209, 230–250, 264–284, 298–318, 335–355, 356–376, 397–417, 438–458, and 485–505; these read FPWL…VPFI, WFAL…YLYG, VSWL…ISMP, LILL…PVTF, PKLF…VFAV, LLFF…LAIW, FIIY…AMGF, GFQL…LPIV, TAPV…YALM, FAPL…LTSF, MGFV…GAML, QMIS…ATYD, FALW…SGFV, IVIA…LLSM, and VYII…PRLM.

It belongs to the complex I subunit 4 family.

Its subcellular location is the cellular thylakoid membrane. The catalysed reaction is a plastoquinone + NADH + (n+1) H(+)(in) = a plastoquinol + NAD(+) + n H(+)(out). It carries out the reaction a plastoquinone + NADPH + (n+1) H(+)(in) = a plastoquinol + NADP(+) + n H(+)(out). Functionally, NDH-1 shuttles electrons from NAD(P)H, via FMN and iron-sulfur (Fe-S) centers, to quinones in the respiratory chain. The immediate electron acceptor for the enzyme in this species is believed to be plastoquinone. Couples the redox reaction to proton translocation (for every two electrons transferred, four hydrogen ions are translocated across the cytoplasmic membrane), and thus conserves the redox energy in a proton gradient. The protein is NAD(P)H-quinone oxidoreductase chain 4 of Prochlorococcus marinus (strain MIT 9303).